The following is a 218-amino-acid chain: 7-cyano-7-deazaguanine synthase (218 aa).

ATP is bound at residue 9-19 (YSGGMDSFTVL). Zn(2+) contacts are provided by C185, C193, C196, and C199.

The protein belongs to the QueC family. Zn(2+) serves as cofactor.

It carries out the reaction 7-carboxy-7-deazaguanine + NH4(+) + ATP = 7-cyano-7-deazaguanine + ADP + phosphate + H2O + H(+). The protein operates within purine metabolism; 7-cyano-7-deazaguanine biosynthesis. Catalyzes the ATP-dependent conversion of 7-carboxy-7-deazaguanine (CDG) to 7-cyano-7-deazaguanine (preQ(0)). This chain is 7-cyano-7-deazaguanine synthase, found in Pseudoalteromonas translucida (strain TAC 125).